The chain runs to 275 residues: Translation initiation factor 2 subunit alpha (275 aa).

One can recognise an S1 motif domain in the interval 12-83; sequence GEFVVATVKR…RKGHIDLSLR (72 aa).

It belongs to the eIF-2-alpha family. As to quaternary structure, heterotrimer composed of an alpha, a beta and a gamma chain.

In terms of biological role, eIF-2 functions in the early steps of protein synthesis by forming a ternary complex with GTP and initiator tRNA. The polypeptide is Translation initiation factor 2 subunit alpha (eif2a) (Pyrococcus abyssi (strain GE5 / Orsay)).